The primary structure comprises 371 residues: Anhydro-N-acetylmuramic acid kinase (371 aa).

9-16 (GTSLDAVD) is an ATP binding site.

The protein belongs to the anhydro-N-acetylmuramic acid kinase family.

The enzyme catalyses 1,6-anhydro-N-acetyl-beta-muramate + ATP + H2O = N-acetyl-D-muramate 6-phosphate + ADP + H(+). Its pathway is amino-sugar metabolism; 1,6-anhydro-N-acetylmuramate degradation. It functions in the pathway cell wall biogenesis; peptidoglycan recycling. In terms of biological role, catalyzes the specific phosphorylation of 1,6-anhydro-N-acetylmuramic acid (anhMurNAc) with the simultaneous cleavage of the 1,6-anhydro ring, generating MurNAc-6-P. Is required for the utilization of anhMurNAc either imported from the medium or derived from its own cell wall murein, and thus plays a role in cell wall recycling. This Caulobacter vibrioides (strain ATCC 19089 / CIP 103742 / CB 15) (Caulobacter crescentus) protein is Anhydro-N-acetylmuramic acid kinase.